Here is a 493-residue protein sequence, read N- to C-terminus: Inosine-5'-monophosphate dehydrogenase (493 aa).

2 CBS domains span residues 97 to 155 (VIID…NAPI) and 159 to 219 (MTSE…AKDE). Residues Asp-253 and 303-305 (GIG) each bind NAD(+). Residues Gly-305 and Gly-307 each contribute to the K(+) site. Ser-308 is an IMP binding site. Cys-310 provides a ligand contact to K(+). Cys-310 functions as the Thioimidate intermediate in the catalytic mechanism. Residues 343–345 (DGG), 366–367 (GS), and 390–394 (YRGMG) each bind IMP. The Proton acceptor role is filled by Arg-406. Glu-421 lines the IMP pocket. Residues Glu-475, Ser-476, and His-477 each coordinate K(+).

Belongs to the IMPDH/GMPR family. As to quaternary structure, homotetramer. K(+) is required as a cofactor.

The enzyme catalyses IMP + NAD(+) + H2O = XMP + NADH + H(+). It functions in the pathway purine metabolism; XMP biosynthesis via de novo pathway; XMP from IMP: step 1/1. Its activity is regulated as follows. Mycophenolic acid (MPA) is a non-competitive inhibitor that prevents formation of the closed enzyme conformation by binding to the same site as the amobile flap. In contrast, mizoribine monophosphate (MZP) is a competitive inhibitor that induces the closed conformation. MPA is a potent inhibitor of mammalian IMPDHs but a poor inhibitor of the bacterial enzymes. MZP is a more potent inhibitor of bacterial IMPDH. In terms of biological role, catalyzes the conversion of inosine 5'-phosphate (IMP) to xanthosine 5'-phosphate (XMP), the first committed and rate-limiting step in the de novo synthesis of guanine nucleotides, and therefore plays an important role in the regulation of cell growth. This chain is Inosine-5'-monophosphate dehydrogenase, found in Streptococcus pyogenes serotype M1.